Here is a 489-residue protein sequence, read N- to C-terminus: Betaine aldehyde dehydrogenase (489 aa).

Residues T26 and D93 each contribute to the K(+) site. Position 150–152 (150–152 (GAW)) interacts with NAD(+). K162 serves as the catalytic Charge relay system. 176–179 (KPSE) serves as a coordination point for NAD(+). K(+) is bound at residue V180. Position 229–232 (229–232 (GVET)) interacts with NAD(+). L245 provides a ligand contact to K(+). The active-site Proton acceptor is the E251. Residues G253, C285, and E386 each coordinate NAD(+). The active-site Nucleophile is the C285. C285 carries the cysteine sulfenic acid (-SOH) modification. K(+)-binding residues include K456 and G459. E463 (charge relay system) is an active-site residue.

It belongs to the aldehyde dehydrogenase family. Dimer of dimers. The cofactor is K(+).

It catalyses the reaction betaine aldehyde + NAD(+) + H2O = glycine betaine + NADH + 2 H(+). The protein operates within amine and polyamine biosynthesis; betaine biosynthesis via choline pathway; betaine from betaine aldehyde: step 1/1. In terms of biological role, involved in the biosynthesis of the osmoprotectant glycine betaine. Catalyzes the irreversible oxidation of betaine aldehyde to the corresponding acid. The polypeptide is Betaine aldehyde dehydrogenase (Burkholderia pseudomallei (strain K96243)).